A 165-amino-acid chain; its full sequence is Protein SprT (165 aa).

The 144-residue stretch at 20-163 (EKLAQANLKL…RCVHCGEQLV (144 aa)) folds into the SprT-like domain. Residue His78 coordinates Zn(2+). Glu79 is a catalytic residue. His82 is a binding site for Zn(2+).

It belongs to the SprT family. Zn(2+) serves as cofactor.

It is found in the cytoplasm. This chain is Protein SprT, found in Shigella sonnei (strain Ss046).